Reading from the N-terminus, the 281-residue chain is ATP phosphoribosyltransferase (281 aa).

This sequence belongs to the ATP phosphoribosyltransferase family. Long subfamily. Mg(2+) serves as cofactor.

It is found in the cytoplasm. The enzyme catalyses 1-(5-phospho-beta-D-ribosyl)-ATP + diphosphate = 5-phospho-alpha-D-ribose 1-diphosphate + ATP. It participates in amino-acid biosynthesis; L-histidine biosynthesis; L-histidine from 5-phospho-alpha-D-ribose 1-diphosphate: step 1/9. Feedback inhibited by histidine. Its function is as follows. Catalyzes the condensation of ATP and 5-phosphoribose 1-diphosphate to form N'-(5'-phosphoribosyl)-ATP (PR-ATP). Has a crucial role in the pathway because the rate of histidine biosynthesis seems to be controlled primarily by regulation of HisG enzymatic activity. This is ATP phosphoribosyltransferase from Salinispora tropica (strain ATCC BAA-916 / DSM 44818 / JCM 13857 / NBRC 105044 / CNB-440).